Here is a 259-residue protein sequence, read N- to C-terminus: Imidazole glycerol phosphate synthase subunit HisF (259 aa).

Catalysis depends on residues Asp-11 and Asp-130.

This sequence belongs to the HisA/HisF family. As to quaternary structure, heterodimer of HisH and HisF.

It is found in the cytoplasm. It catalyses the reaction 5-[(5-phospho-1-deoxy-D-ribulos-1-ylimino)methylamino]-1-(5-phospho-beta-D-ribosyl)imidazole-4-carboxamide + L-glutamine = D-erythro-1-(imidazol-4-yl)glycerol 3-phosphate + 5-amino-1-(5-phospho-beta-D-ribosyl)imidazole-4-carboxamide + L-glutamate + H(+). It functions in the pathway amino-acid biosynthesis; L-histidine biosynthesis; L-histidine from 5-phospho-alpha-D-ribose 1-diphosphate: step 5/9. In terms of biological role, IGPS catalyzes the conversion of PRFAR and glutamine to IGP, AICAR and glutamate. The HisF subunit catalyzes the cyclization activity that produces IGP and AICAR from PRFAR using the ammonia provided by the HisH subunit. The protein is Imidazole glycerol phosphate synthase subunit HisF of Carboxydothermus hydrogenoformans (strain ATCC BAA-161 / DSM 6008 / Z-2901).